The primary structure comprises 161 residues: SsrA-binding protein (161 aa).

The disordered stretch occupies residues 140 to 161 (KRESIKERDWKRDKQRLLKDRG).

This sequence belongs to the SmpB family.

It localises to the cytoplasm. Required for rescue of stalled ribosomes mediated by trans-translation. Binds to transfer-messenger RNA (tmRNA), required for stable association of tmRNA with ribosomes. tmRNA and SmpB together mimic tRNA shape, replacing the anticodon stem-loop with SmpB. tmRNA is encoded by the ssrA gene; the 2 termini fold to resemble tRNA(Ala) and it encodes a 'tag peptide', a short internal open reading frame. During trans-translation Ala-aminoacylated tmRNA acts like a tRNA, entering the A-site of stalled ribosomes, displacing the stalled mRNA. The ribosome then switches to translate the ORF on the tmRNA; the nascent peptide is terminated with the 'tag peptide' encoded by the tmRNA and targeted for degradation. The ribosome is freed to recommence translation, which seems to be the essential function of trans-translation. This is SsrA-binding protein from Sphingopyxis alaskensis (strain DSM 13593 / LMG 18877 / RB2256) (Sphingomonas alaskensis).